We begin with the raw amino-acid sequence, 274 residues long: tRNA dimethylallyltransferase (274 aa).

An interaction with substrate tRNA region spans residues 9-12 (DSLS).

This sequence belongs to the IPP transferase family. As to quaternary structure, monomer. The cofactor is Mg(2+).

It carries out the reaction adenosine(37) in tRNA + dimethylallyl diphosphate = N(6)-dimethylallyladenosine(37) in tRNA + diphosphate. Functionally, catalyzes the transfer of a dimethylallyl group onto the adenine at position 37 in tRNAs that read codons beginning with uridine, leading to the formation of N6-(dimethylallyl)adenosine (i(6)A). The chain is tRNA dimethylallyltransferase (miaA) from Helicobacter pylori (strain P12).